The sequence spans 215 residues: Glycerol-3-phosphate acyltransferase (215 aa).

A run of 6 helical transmembrane segments spans residues Leu3 to Gly23, Thr42 to Ile61, Thr68 to Leu90, Ala110 to Leu130, Leu134 to Leu154, and Leu162 to Ile182.

The protein belongs to the PlsY family. In terms of assembly, probably interacts with PlsX.

It is found in the cell membrane. The enzyme catalyses an acyl phosphate + sn-glycerol 3-phosphate = a 1-acyl-sn-glycero-3-phosphate + phosphate. Its pathway is lipid metabolism; phospholipid metabolism. In terms of biological role, catalyzes the transfer of an acyl group from acyl-phosphate (acyl-PO(4)) to glycerol-3-phosphate (G3P) to form lysophosphatidic acid (LPA). This enzyme utilizes acyl-phosphate as fatty acyl donor, but not acyl-CoA or acyl-ACP. The sequence is that of Glycerol-3-phosphate acyltransferase from Streptococcus equi subsp. equi (strain 4047).